A 1455-amino-acid chain; its full sequence is DNA-directed RNA polymerase subunit beta (1455 aa).

The protein belongs to the RNA polymerase beta chain family. As to quaternary structure, the RNAP catalytic core consists of 2 alpha, 1 beta, 1 beta' and 1 omega subunit. When a sigma factor is associated with the core the holoenzyme is formed, which can initiate transcription.

The enzyme catalyses RNA(n) + a ribonucleoside 5'-triphosphate = RNA(n+1) + diphosphate. In terms of biological role, DNA-dependent RNA polymerase catalyzes the transcription of DNA into RNA using the four ribonucleoside triphosphates as substrates. The sequence is that of DNA-directed RNA polymerase subunit beta from Rhizorhabdus wittichii (strain DSM 6014 / CCUG 31198 / JCM 15750 / NBRC 105917 / EY 4224 / RW1) (Sphingomonas wittichii).